Reading from the N-terminus, the 87-residue chain is UPF0367 protein P9303_26451 (87 aa).

Belongs to the UPF0367 family.

The protein is UPF0367 protein P9303_26451 of Prochlorococcus marinus (strain MIT 9303).